The primary structure comprises 407 residues: Probable tRNA sulfurtransferase (407 aa).

The 105-residue stretch at 61-165 (NEITYRLSKI…LDAIYMYEEV (105 aa)) folds into the THUMP domain. ATP-binding positions include 183-184 (ML), 208-209 (HF), arginine 265, glycine 287, and glutamine 296.

The protein belongs to the ThiI family.

It localises to the cytoplasm. The catalysed reaction is [ThiI sulfur-carrier protein]-S-sulfanyl-L-cysteine + a uridine in tRNA + 2 reduced [2Fe-2S]-[ferredoxin] + ATP + H(+) = [ThiI sulfur-carrier protein]-L-cysteine + a 4-thiouridine in tRNA + 2 oxidized [2Fe-2S]-[ferredoxin] + AMP + diphosphate. It catalyses the reaction [ThiS sulfur-carrier protein]-C-terminal Gly-Gly-AMP + S-sulfanyl-L-cysteinyl-[cysteine desulfurase] + AH2 = [ThiS sulfur-carrier protein]-C-terminal-Gly-aminoethanethioate + L-cysteinyl-[cysteine desulfurase] + A + AMP + 2 H(+). Its pathway is cofactor biosynthesis; thiamine diphosphate biosynthesis. Its function is as follows. Catalyzes the ATP-dependent transfer of a sulfur to tRNA to produce 4-thiouridine in position 8 of tRNAs, which functions as a near-UV photosensor. Also catalyzes the transfer of sulfur to the sulfur carrier protein ThiS, forming ThiS-thiocarboxylate. This is a step in the synthesis of thiazole, in the thiamine biosynthesis pathway. The sulfur is donated as persulfide by IscS. This is Probable tRNA sulfurtransferase from Staphylococcus aureus (strain N315).